A 351-amino-acid chain; its full sequence is Foldase protein PrsA 1 (351 aa).

An N-terminal signal peptide occupies residues 1 to 22; that stretch reads MKNSNKLIASVVTLASVMALAA. The N-palmitoyl cysteine moiety is linked to residue C23. C23 carries the S-diacylglycerol cysteine lipid modification. A PpiC domain is found at 145-240; the sequence is TPTMAVEMIT…KKFYIVKVTK (96 aa). Low complexity-rich tracts occupy residues 303–317 and 326–351; these read KTKA…SESS and ESEQ…PAAQ. Residues 303–351 are disordered; it reads KTKAASESSTTSESSKAAEENPSESEQTQTSSAEEPTETEAQTQEPAAQ.

It belongs to the PrsA family.

Its subcellular location is the cell membrane. It catalyses the reaction [protein]-peptidylproline (omega=180) = [protein]-peptidylproline (omega=0). Functionally, plays a major role in protein secretion by helping the post-translocational extracellular folding of several secreted proteins. The polypeptide is Foldase protein PrsA 1 (Streptococcus pyogenes serotype M6 (strain ATCC BAA-946 / MGAS10394)).